Here is a 1124-residue protein sequence, read N- to C-terminus: Putative DNA mismatch repair protein mutS homolog L359 (1124 aa).

Ser-779–Ser-786 is an ATP binding site.

Belongs to the DNA mismatch repair MutS family.

Functionally, may be involved in DNA-mismatch repair. The chain is Putative DNA mismatch repair protein mutS homolog L359 from Acanthamoeba polyphaga (Amoeba).